Reading from the N-terminus, the 315-residue chain is Homoserine kinase (315 aa).

Residue 97-107 (PPARGLGSSAT) coordinates ATP.

The protein belongs to the GHMP kinase family. Homoserine kinase subfamily.

It is found in the cytoplasm. It catalyses the reaction L-homoserine + ATP = O-phospho-L-homoserine + ADP + H(+). The protein operates within amino-acid biosynthesis; L-threonine biosynthesis; L-threonine from L-aspartate: step 4/5. Catalyzes the ATP-dependent phosphorylation of L-homoserine to L-homoserine phosphate. This Synechococcus sp. (strain CC9311) protein is Homoserine kinase.